The primary structure comprises 522 residues: DNA damage-binding protein CMR1 (522 aa).

A disordered region spans residues 38 to 100 (AGVLEKSRAP…DNQLLKMGSP (63 aa)). Over residues 54–63 (TTNTRATKSA) the composition is skewed to polar residues. A Phosphoserine modification is found at Ser64. A Phosphothreonine modification is found at Thr69. Basic and acidic residues predominate over residues 75–84 (LRGESADDVK). WD repeat units follow at residues 183 to 224 (ITYE…LADS), 239 to 281 (LFTK…EVLT), 287 to 327 (DDSL…SEYN), 331 to 371 (LADK…KKPE), 388 to 427 (DSRL…HLSA), 442 to 481 (GRWT…LAHL), and 482 to 521 (PTAT…IKQE). Position 224 is a phosphoserine (Ser224).

Belongs to the WD repeat DDB2/WDR76 family.

The protein localises to the cytoplasm. It localises to the nucleus. Functionally, DNA-binding protein that binds to both single- and double-stranded DNA. Binds preferentially to UV-damaged DNA in vitro. May be involved in DNA-metabolic processes. In Saccharomyces cerevisiae (strain ATCC 204508 / S288c) (Baker's yeast), this protein is DNA damage-binding protein CMR1.